The sequence spans 248 residues: Inner membrane protein pE248R (248 aa).

Gly-2 carries the N-myristoyl glycine; by host lipid modification. Topologically, residues 2–199 are cytoplasmic; sequence GGSTSKNSFK…ADAISAVFKN (198 aa). The helical transmembrane segment at 200–220 threads the bilayer; it reads IMVAAVVIVLIIVGFIAVFYF. Topologically, residues 221-248 are extracellular; sequence LHSRHRHEEEEEAEPLISNKVLKNAAVS.

The protein belongs to the asfivirus E248R family. Interacts with A151R.

It is found in the host membrane. It localises to the virion membrane. Functionally, essential for viral fusion with host endosomal membrane and core release. This is Inner membrane protein pE248R from Ornithodoros (relapsing fever ticks).